The following is a 192-amino-acid chain: Ion-translocating oxidoreductase complex subunit A (192 aa).

6 helical membrane passes run 5 to 25 (ILLL…FLGL), 39 to 59 (IGMG…AYLV), 72 to 92 (LRTM…EMVV), 102 to 122 (LLGI…VALL), 134 to 154 (IIYG…FASM), and 171 to 191 (SIAM…TGLV).

It belongs to the NqrDE/RnfAE family. As to quaternary structure, the complex is composed of six subunits: RnfA, RnfB, RnfC, RnfD, RnfE and RnfG.

The protein localises to the cell inner membrane. In terms of biological role, part of a membrane-bound complex that couples electron transfer with translocation of ions across the membrane. This chain is Ion-translocating oxidoreductase complex subunit A, found in Vibrio vulnificus (strain CMCP6).